We begin with the raw amino-acid sequence, 607 residues long: MWFAVVAIFLALVAFLYRYVVGSGPNPFAIDTREPLKPMVFDRKLKNKVLKQGFLASRVPEDLDAVVVGSGIGGLAIAVLLAKVGKKVLVLEQHDRAGGCCHTFKEQGFEFDVGIHYIGELSNHKPLRCIIDQMTNGQLQWDPLENPFDNVVIGPPENRRIYQIYSGRKRYMDELKKCFPGEEKAIDEYVRLCKEVGQGVWVMVLLKFLPTPIANFLVRTGLANRLTSFSRYASRSLTDVVNELTQNKDLRAVLSYIFGTYGKIPKEASFSMHSLIVNHYMNGAWYPKGGATEIAYHMIPIIEKAGGAVLVRAPVNRILLNDAKEAIGVSVLKGQEEVHVRAPIVISDAGIFNTYEYLLPKDVQTMPAIQKQLSMLQHGDSGLSIFIGLDGTKEELGLKADNYFIYPENNIDELLEDYRSGNREESAKKNPLIFVASPSAKDSTWPERTPGKSTLTVVSFANYEWFEEWKDDKVKNRSTDYKQLKELFINYILEAVTEIYPKIKDRIEYVDAGTPITNQHYIAAPRGEIYGADHGIPRFSAELNATIRAQTPIKNLYLTGQDLMLCGFAGALTGALTCGSVILNRNLHLEAFSLAKRVQNGNNKKKT.

The N-terminal stretch at 1 to 22 (MWFAVVAIFLALVAFLYRYVVG) is a signal peptide.

The protein belongs to the carotenoid/retinoid oxidoreductase family. CrtISO subfamily. NAD(+) serves as cofactor. It depends on NADP(+) as a cofactor. FAD is required as a cofactor.

It localises to the endoplasmic reticulum membrane. The enzyme catalyses all-trans-13,14-dihydroretinol + A = all-trans-retinol + AH2. Catalyzes the saturation of all-trans-retinol to all-trans-13,14-dihydroretinol. In addition, saturates the 7-8 double bond of all-trans-retinol to produce all-trans-7,8-dihydroretinol. Can also use vitamin A2 (all-trans-3,4-didehydroretinol) as a substrate, to produce all-trans-13,14-dihydro-3,4-didehydroretinol or all-trans-7,8-dihydro-3,4-didehydroretinol. May play a role in vitamin A metabolism. The sequence is that of All-trans-retinol 13,14-reductase from Danio rerio (Zebrafish).